A 123-amino-acid chain; its full sequence is UPF0231 protein plu3616 (123 aa).

The protein belongs to the UPF0231 family.

The chain is UPF0231 protein plu3616 from Photorhabdus laumondii subsp. laumondii (strain DSM 15139 / CIP 105565 / TT01) (Photorhabdus luminescens subsp. laumondii).